The following is a 254-amino-acid chain: Alcohol dehydrogenase (254 aa).

10 to 33 is an NAD(+) binding site; the sequence is FVAGLGGIGLDTSRELVKRDLKNL. Ser-138 contacts substrate. The active-site Proton acceptor is Tyr-151.

Belongs to the short-chain dehydrogenases/reductases (SDR) family. Homodimer.

It carries out the reaction a primary alcohol + NAD(+) = an aldehyde + NADH + H(+). The enzyme catalyses a secondary alcohol + NAD(+) = a ketone + NADH + H(+). This is Alcohol dehydrogenase (Adh) from Drosophila subobscura (Fruit fly).